The sequence spans 684 residues: Amino-acid acetyltransferase, mitochondrial (684 aa).

The tract at residues 414–439 (PQDATNSASEPRDPSQLSTVATRRKR) is disordered. A compositionally biased stretch (polar residues) spans 415–434 (QDATNSASEPRDPSQLSTVA). Positions 505–674 (GKSRMTLNDP…YEGVCRGIEP (170 aa)) constitute an N-acetyltransferase domain.

It belongs to the acetyltransferase family.

It is found in the mitochondrion. The enzyme catalyses L-glutamate + acetyl-CoA = N-acetyl-L-glutamate + CoA + H(+). It functions in the pathway amino-acid biosynthesis; L-arginine biosynthesis; N(2)-acetyl-L-ornithine from L-glutamate: step 1/4. N-acetylglutamate synthase involved in arginine biosynthesis. This Ajellomyces capsulatus (strain NAm1 / WU24) (Darling's disease fungus) protein is Amino-acid acetyltransferase, mitochondrial (ARG2).